The sequence spans 408 residues: Aminoacylase-1A (408 aa).

His-80 contacts Zn(2+). Residue Asp-82 is part of the active site. Asp-113 contributes to the Zn(2+) binding site. Residue Glu-147 is the Proton acceptor of the active site. Zn(2+) is bound by residues Glu-148, Glu-175, and His-373. Phosphoserine is present on Ser-408.

It belongs to the peptidase M20A family. Homodimer. Zn(2+) serves as cofactor. In terms of processing, the N-terminus is blocked.

It is found in the cytoplasm. The catalysed reaction is an N-acyl-L-amino acid + H2O = an L-alpha-amino acid + a carboxylate. The enzyme catalyses an N-acetyl-L-cysteine-S-conjugate + H2O = an S-substituted L-cysteine + acetate. Functionally, involved in the hydrolysis of N-acylated or N-acetylated amino acids (except L-aspartate). The chain is Aminoacylase-1A (Acy1a) from Rattus norvegicus (Rat).